A 390-amino-acid polypeptide reads, in one-letter code: Probable inactive secreted aspartyl protease (390 aa).

The N-terminal stretch at 1 to 20 is a signal peptide; it reads MQLTIKALVGILTTISAATA. Positions 21-69 are cleaved as a propeptide — removed in mature form; it reads VSFDMENLGAEKRGVSGEELHMLHGNEVLARFANGVYPEVANGTRVSKR. N62 carries an N-linked (GlcNAc...) asparagine glycan. Residues 86–388 enclose the Peptidase A1 domain; that stretch reads WAVKAKIGSN…KFDSNEMQIA (303 aa). Catalysis depends on residues D104 and D273. C313 and C346 form a disulfide bridge.

This sequence belongs to the peptidase A1 family.

It is found in the secreted. Probable inactive secreted aspartyl protease. May promote an inflammatory immune response in the host when the host skin barrier is breached. Has no detectable protease activity in vitro on fluorogenic substrates, a peptide library, or with the general protease substrate casein. The presence of the enzyme also does not affect the activity of the secreted aspartyl protease SAP1. This is Probable inactive secreted aspartyl protease from Malassezia globosa (strain ATCC MYA-4612 / CBS 7966) (Dandruff-associated fungus).